The following is a 283-amino-acid chain: 4-hydroxy-3-methylbut-2-enyl diphosphate reductase (283 aa).

Cys12 lines the [4Fe-4S] cluster pocket. His41 and His74 together coordinate (2E)-4-hydroxy-3-methylbut-2-enyl diphosphate. 2 residues coordinate dimethylallyl diphosphate: His41 and His74. The isopentenyl diphosphate site is built by His41 and His74. Cys96 serves as a coordination point for [4Fe-4S] cluster. His124 provides a ligand contact to (2E)-4-hydroxy-3-methylbut-2-enyl diphosphate. A dimethylallyl diphosphate-binding site is contributed by His124. An isopentenyl diphosphate-binding site is contributed by His124. The active-site Proton donor is Glu126. Thr161 provides a ligand contact to (2E)-4-hydroxy-3-methylbut-2-enyl diphosphate. Cys189 is a binding site for [4Fe-4S] cluster. Ser217, Asn219, and Ser261 together coordinate (2E)-4-hydroxy-3-methylbut-2-enyl diphosphate. Positions 217, 219, and 261 each coordinate dimethylallyl diphosphate. Positions 217, 219, and 261 each coordinate isopentenyl diphosphate.

Belongs to the IspH family. Requires [4Fe-4S] cluster as cofactor.

The enzyme catalyses isopentenyl diphosphate + 2 oxidized [2Fe-2S]-[ferredoxin] + H2O = (2E)-4-hydroxy-3-methylbut-2-enyl diphosphate + 2 reduced [2Fe-2S]-[ferredoxin] + 2 H(+). The catalysed reaction is dimethylallyl diphosphate + 2 oxidized [2Fe-2S]-[ferredoxin] + H2O = (2E)-4-hydroxy-3-methylbut-2-enyl diphosphate + 2 reduced [2Fe-2S]-[ferredoxin] + 2 H(+). It participates in isoprenoid biosynthesis; dimethylallyl diphosphate biosynthesis; dimethylallyl diphosphate from (2E)-4-hydroxy-3-methylbutenyl diphosphate: step 1/1. Its pathway is isoprenoid biosynthesis; isopentenyl diphosphate biosynthesis via DXP pathway; isopentenyl diphosphate from 1-deoxy-D-xylulose 5-phosphate: step 6/6. Catalyzes the conversion of 1-hydroxy-2-methyl-2-(E)-butenyl 4-diphosphate (HMBPP) into a mixture of isopentenyl diphosphate (IPP) and dimethylallyl diphosphate (DMAPP). Acts in the terminal step of the DOXP/MEP pathway for isoprenoid precursor biosynthesis. This Anaeromyxobacter sp. (strain Fw109-5) protein is 4-hydroxy-3-methylbut-2-enyl diphosphate reductase.